A 241-amino-acid polypeptide reads, in one-letter code: Cytochrome b6-f complex iron-sulfur subunit 2, cyanelle (241 aa).

Residues 1–62 constitute a cyanelle transit peptide; sequence MSAFACSAVA…AAKATTFSIS (62 aa). Residues 83 to 103 form a helical membrane-spanning segment; it reads LLGAIAGPTIGAGGPFVSFLV. The 97-residue stretch at 127 to 223 folds into the Rieske domain; that stretch reads VEKWLETXKP…VNVLEDGVVA (97 aa). Cys169, His171, Cys187, and His190 together coordinate [2Fe-2S] cluster. Residues Cys174 and Cys189 are joined by a disulfide bond.

The protein belongs to the Rieske iron-sulfur protein family. The 4 large subunits of the cytochrome b6-f complex are cytochrome b6, subunit IV (17 kDa polypeptide, petD), cytochrome f and the Rieske protein, while the 4 small subunits are petG, petL, petM and petN. The complex functions as a dimer. The cofactor is [2Fe-2S] cluster.

It localises to the plastid. It is found in the cyanelle thylakoid membrane. It carries out the reaction 2 oxidized [plastocyanin] + a plastoquinol + 2 H(+)(in) = 2 reduced [plastocyanin] + a plastoquinone + 4 H(+)(out). Its function is as follows. Component of the cytochrome b6-f complex, which mediates electron transfer between photosystem II (PSII) and photosystem I (PSI), cyclic electron flow around PSI, and state transitions. This Cyanophora paradoxa protein is Cytochrome b6-f complex iron-sulfur subunit 2, cyanelle (petC-2).